The primary structure comprises 260 residues: Small ribosomal subunit protein uS2 (260 aa).

The protein belongs to the universal ribosomal protein uS2 family.

This is Small ribosomal subunit protein uS2 from Roseobacter denitrificans (strain ATCC 33942 / OCh 114) (Erythrobacter sp. (strain OCh 114)).